The sequence spans 601 residues: Elongation factor 4 (601 aa).

One can recognise a tr-type G domain in the interval S4–K186. Residues D16–T21 and N133–D136 each bind GTP.

Belongs to the TRAFAC class translation factor GTPase superfamily. Classic translation factor GTPase family. LepA subfamily.

It localises to the cell inner membrane. The enzyme catalyses GTP + H2O = GDP + phosphate + H(+). Its function is as follows. Required for accurate and efficient protein synthesis under certain stress conditions. May act as a fidelity factor of the translation reaction, by catalyzing a one-codon backward translocation of tRNAs on improperly translocated ribosomes. Back-translocation proceeds from a post-translocation (POST) complex to a pre-translocation (PRE) complex, thus giving elongation factor G a second chance to translocate the tRNAs correctly. Binds to ribosomes in a GTP-dependent manner. This is Elongation factor 4 from Koribacter versatilis (strain Ellin345).